Here is a 322-residue protein sequence, read N- to C-terminus: Homoserine kinase (322 aa).

106 to 116 is an ATP binding site; it reads ALSSGMGGSAA.

It belongs to the GHMP kinase family. Homoserine kinase subfamily.

It is found in the cytoplasm. The catalysed reaction is L-homoserine + ATP = O-phospho-L-homoserine + ADP + H(+). The protein operates within amino-acid biosynthesis; L-threonine biosynthesis; L-threonine from L-aspartate: step 4/5. In terms of biological role, catalyzes the ATP-dependent phosphorylation of L-homoserine to L-homoserine phosphate. The chain is Homoserine kinase from Xanthomonas campestris pv. campestris (strain B100).